The sequence spans 429 residues: Enolase (429 aa).

Gln162 is a binding site for (2R)-2-phosphoglycerate. Catalysis depends on Glu204, which acts as the Proton donor. 3 residues coordinate Mg(2+): Asp241, Glu282, and Asp309. The (2R)-2-phosphoglycerate site is built by Lys334, Arg363, Ser364, and Lys385. The active-site Proton acceptor is Lys334.

The protein belongs to the enolase family. Mg(2+) is required as a cofactor.

Its subcellular location is the cytoplasm. The protein localises to the secreted. It is found in the cell surface. The catalysed reaction is (2R)-2-phosphoglycerate = phosphoenolpyruvate + H2O. The protein operates within carbohydrate degradation; glycolysis; pyruvate from D-glyceraldehyde 3-phosphate: step 4/5. Catalyzes the reversible conversion of 2-phosphoglycerate (2-PG) into phosphoenolpyruvate (PEP). It is essential for the degradation of carbohydrates via glycolysis. This chain is Enolase, found in Acidothermus cellulolyticus (strain ATCC 43068 / DSM 8971 / 11B).